The primary structure comprises 491 residues: Glutamyl-tRNA(Gln) amidotransferase subunit A (491 aa).

Residues K77 and S152 each act as charge relay system in the active site. S176 serves as the catalytic Acyl-ester intermediate.

This sequence belongs to the amidase family. GatA subfamily. Heterotrimer of A, B and C subunits.

It carries out the reaction L-glutamyl-tRNA(Gln) + L-glutamine + ATP + H2O = L-glutaminyl-tRNA(Gln) + L-glutamate + ADP + phosphate + H(+). Its function is as follows. Allows the formation of correctly charged Gln-tRNA(Gln) through the transamidation of misacylated Glu-tRNA(Gln) in organisms which lack glutaminyl-tRNA synthetase. The reaction takes place in the presence of glutamine and ATP through an activated gamma-phospho-Glu-tRNA(Gln). The sequence is that of Glutamyl-tRNA(Gln) amidotransferase subunit A from Chlamydia trachomatis serovar L2 (strain ATCC VR-902B / DSM 19102 / 434/Bu).